Reading from the N-terminus, the 302-residue chain is MAAAAAAAAAAGAAGGRGSGPGRRRHLVPGAGGEAGEGDPGGAGDYGNGLESEELEPGELLPEPEPEEEPPRPRAPPGAPGPGPGSGAPGSQEEEEEPGLVEADPGDGAIEDPELEAIKARVREMEEEAEKLKELQNEVEKQMNMSPPPGNAGPVIMSLEEKMEADARSIYVGNVDYGATAEELEAHFHGCGSVNRVTILCDKFSGHPKGFAYIEFSDKESVRTSLALDESLFRGRQIKVIPKRTNRPGISTTDRGFPRSRYRARTTNYNSSRSRFYSGFNSRPRGRIYRGRARATSWYSPY.

A compositionally biased stretch (low complexity) spans 1 to 12 (MAAAAAAAAAAG). Positions 1-111 (MAAAAAAAAA…EADPGDGAIE (111 aa)) are disordered. A2 carries the post-translational modification N-acetylalanine. Residues 2-141 (AAAAAAAAAA…LKELQNEVEK (140 aa)) form an interaction with SKIP region. The residue at position 17 (R17) is an Omega-N-methylarginine. S19 carries the phosphoserine modification. Over residues 30-47 (GAGGEAGEGDPGGAGDYG) the composition is skewed to gly residues. Residues 51–68 (ESEELEPGELLPEPEPEE) show a composition bias toward acidic residues. S52 is modified (phosphoserine). The span at 73-83 (PRAPPGAPGPG) shows a compositional bias: pro residues. The residue at position 91 (S91) is a Phosphoserine. A coiled-coil region spans residues 111–147 (EDPELEAIKARVREMEEEAEKLKELQNEVEKQMNMSP). Residues 115 to 143 (LEAIKARVREMEEEAEKLKELQNEVEKQM) are stimulates PAPOLA. Phosphoserine is present on residues S146 and S231. Positions 168 to 245 (RSIYVGNVDY…RQIKVIPKRT (78 aa)) constitute an RRM domain. Residues R234, R255, and R259 each carry the asymmetric dimethylarginine; alternate modification. Residues R234, R255, and R259 each carry the omega-N-methylarginine; alternate modification. The segment at 255–302 (RGFPRSRYRARTTNYNSSRSRFYSGFNSRPRGRIYRGRARATSWYSPY) is strong poly(A) affinity and self-association. An asymmetric dimethylarginine mark is found at R261, R263, R265, R273, R275, R283, R285, R287, R290, R292, and R294. The interval 282–302 (SRPRGRIYRGRARATSWYSPY) is interaction with PAPOLA.

Monomer and homooligomer. Identified in a IGF2BP1-dependent mRNP granule complex containing untranslated mRNAs. Binds RNA as a monomer and oligomerizes when bound to poly(A). Interacts with PAPOLA, but only in presence of oligo(A) RNA. Interacts with NUDT21/CPSF5 and transportin. Associates in a ternary complex with CPSF4 and NS/NS1 and interaction with NS/NS1, blocks nuclear export of host cell mRNAs. Associates in a single complex with SKIP and MYOD1 and interacts with SKIP in differentiated myocytes. May interact with SETX. Interacts (via RRM domain and C-terminal arginine-rich region) with ZFP36 (via hypophosphorylated form); this interaction occurs in the nucleus in a RNA-independent manner, decreases in presence of single-stranded poly(A) RNA-oligomer and in a p38-dependent-manner and may down-regulated RNA poly(A) polymerase activity. Component of the poly(A) tail exosome targeting (PAXT) complex composed of PABPN1, ZFC3H1 and MTREX. Interacts with ZFC3H1 in a RNase-insensitive manner. Interacts with FRG1. Interacts with ZC3H11A. Post-translationally, arginine dimethylation is asymmetric and involves PRMT1 and PRMT3. It does not influence the RNA binding properties. In terms of tissue distribution, ubiquitous.

The protein localises to the cytoplasm. Its subcellular location is the nucleus. It localises to the nucleus speckle. Its function is as follows. Involved in the 3'-end formation of mRNA precursors (pre-mRNA) by the addition of a poly(A) tail of 200-250 nt to the upstream cleavage product. Stimulates poly(A) polymerase (PAPOLA) conferring processivity on the poly(A) tail elongation reaction and also controls the poly(A) tail length. Increases the affinity of poly(A) polymerase for RNA. Is also present at various stages of mRNA metabolism including nucleocytoplasmic trafficking and nonsense-mediated decay (NMD) of mRNA. Cooperates with SKIP to synergistically activate E-box-mediated transcription through MYOD1 and may regulate the expression of muscle-specific genes. Binds to poly(A) and to poly(G) with high affinity. May protect the poly(A) tail from degradation. Subunit of the trimeric poly(A) tail exosome targeting (PAXT) complex, a complex that directs a subset of long and polyadenylated poly(A) RNAs for exosomal degradation. The RNA exosome is fundamental for the degradation of RNA in eukaryotic nuclei. Substrate targeting is facilitated by its cofactor MTREX, which links to RNA-binding protein adapters. This chain is Polyadenylate-binding protein 2 (Pabpn1), found in Mus musculus (Mouse).